A 75-amino-acid polypeptide reads, in one-letter code: UPF0352 protein VP2129 (75 aa).

This sequence belongs to the UPF0352 family.

The chain is UPF0352 protein VP2129 from Vibrio parahaemolyticus serotype O3:K6 (strain RIMD 2210633).